The primary structure comprises 491 residues: Glutamyl-tRNA(Gln) amidotransferase subunit A (491 aa).

Residues Lys-76 and Ser-154 each act as charge relay system in the active site. Ser-178 functions as the Acyl-ester intermediate in the catalytic mechanism.

This sequence belongs to the amidase family. GatA subfamily. In terms of assembly, heterotrimer of A, B and C subunits.

It catalyses the reaction L-glutamyl-tRNA(Gln) + L-glutamine + ATP + H2O = L-glutaminyl-tRNA(Gln) + L-glutamate + ADP + phosphate + H(+). Its function is as follows. Allows the formation of correctly charged Gln-tRNA(Gln) through the transamidation of misacylated Glu-tRNA(Gln) in organisms which lack glutaminyl-tRNA synthetase. The reaction takes place in the presence of glutamine and ATP through an activated gamma-phospho-Glu-tRNA(Gln). In Cereibacter sphaeroides (strain ATCC 17025 / ATH 2.4.3) (Rhodobacter sphaeroides), this protein is Glutamyl-tRNA(Gln) amidotransferase subunit A.